Here is a 268-residue protein sequence, read N- to C-terminus: CCAAT/enhancer-binding protein delta (268 aa).

Disordered regions lie at residues 1–50 (MSAA…STTP), 98–132 (LELLQGGPTRPPGVGSIARGPLKREPDWGDGDAPG), and 152–223 (AAQP…QQKL). N-acetylserine is present on Ser-2. Residue Lys-120 forms a Glycyl lysine isopeptide (Lys-Gly) (interchain with G-Cter in SUMO) linkage. Residues 155 to 173 (PTPPTSPEPPRGSPGPSLA) show a composition bias toward pro residues. Positions 177–201 (VREKGAGKRGPDRGSPEYRQRRERN) are enriched in basic and acidic residues. A bZIP domain is found at 191–254 (SPEYRQRRER…ASLRQFFKEL (64 aa)). Positions 195-222 (RQRRERNNIAVRKSRDKAKRRNQEMQQK) are basic motif. Residues 226 to 254 (LSAENEKLHQRVEQLTRDLASLRQFFKEL) form a leucine-zipper region.

This sequence belongs to the bZIP family. C/EBP subfamily. Binds DNA as a homodimer and as a heterodimer. Can form stable heterodimers with CEBPA, CEBPB and CEBPE. Directly interacts with SPI1/PU.1; this interaction does not affect DNA-binding properties of each partner. Interacts with PRDM16. As to expression, ubiquitously expressed.

Its subcellular location is the nucleus. Transcription activator that recognizes two different DNA motifs: the CCAAT homology common to many promoters and the enhanced core homology common to many enhancers. Important transcription factor regulating the expression of genes involved in immune and inflammatory responses. Transcriptional activator that enhances IL6 transcription alone and as heterodimer with CEBPB. In Rattus norvegicus (Rat), this protein is CCAAT/enhancer-binding protein delta (Cebpd).